The following is a 437-amino-acid chain: Trigger factor (437 aa).

In terms of domain architecture, PPIase FKBP-type spans Asp163–Pro248.

This sequence belongs to the FKBP-type PPIase family. Tig subfamily.

It is found in the cytoplasm. It catalyses the reaction [protein]-peptidylproline (omega=180) = [protein]-peptidylproline (omega=0). In terms of biological role, involved in protein export. Acts as a chaperone by maintaining the newly synthesized protein in an open conformation. Functions as a peptidyl-prolyl cis-trans isomerase. This chain is Trigger factor, found in Variovorax paradoxus (strain S110).